Consider the following 130-residue polypeptide: MSMQDPIADMLTRIRNGQAANKVAVTMPSSKLKVAIANVLKEEGFIEDFKIEGGTKPVLELVLKYFQGNAVVESIQRISRPGLRIYKKKDELPKVMAGLGIAVVSTSKGVMTDRAARQAGLGGEIICYVA.

It belongs to the universal ribosomal protein uS8 family. Part of the 30S ribosomal subunit. Contacts proteins S5 and S12.

One of the primary rRNA binding proteins, it binds directly to 16S rRNA central domain where it helps coordinate assembly of the platform of the 30S subunit. In Buchnera aphidicola subsp. Acyrthosiphon kondoi (Acyrthosiphon kondoi symbiotic bacterium), this protein is Small ribosomal subunit protein uS8.